We begin with the raw amino-acid sequence, 139 residues long: Putative nickel-responsive regulator (139 aa).

Residues His79, His90, His92, and Cys98 each contribute to the Ni(2+) site.

This sequence belongs to the transcriptional regulatory CopG/NikR family. Ni(2+) serves as cofactor.

Transcriptional regulator. In Solibacter usitatus (strain Ellin6076), this protein is Putative nickel-responsive regulator.